The primary structure comprises 155 residues: 3-hydroxyacyl-[acyl-carrier-protein] dehydratase FabZ (155 aa).

Residue His54 is part of the active site.

The protein belongs to the thioester dehydratase family. FabZ subfamily.

It localises to the cytoplasm. It carries out the reaction a (3R)-hydroxyacyl-[ACP] = a (2E)-enoyl-[ACP] + H2O. Its function is as follows. Involved in unsaturated fatty acids biosynthesis. Catalyzes the dehydration of short chain beta-hydroxyacyl-ACPs and long chain saturated and unsaturated beta-hydroxyacyl-ACPs. This is 3-hydroxyacyl-[acyl-carrier-protein] dehydratase FabZ from Burkholderia ambifaria (strain MC40-6).